Consider the following 97-residue polypeptide: Ribosomal biogenesis factor (97 aa).

Position 19 is a phosphoserine (Ser19). Lys21 carries the N6-acetyllysine modification. Ser69 bears the Phosphoserine mark.

In terms of assembly, associates with the pre-60S ribosomal particles.

It localises to the nucleus. Its subcellular location is the nucleolus. Trans-acting factor in ribosome biogenesis required for efficient 40S and 60S subunit production. This chain is Ribosomal biogenesis factor (Rbis), found in Mus musculus (Mouse).